The sequence spans 243 residues: Adenylate dimethylallyltransferase (243 aa).

The catalysed reaction is dimethylallyl diphosphate + AMP = N(6)-(dimethylallyl)adenosine 5'-phosphate + diphosphate. In terms of biological role, transfers dimethylallyl groups to AMP as part of the biosynthesis of cytokinin phytohormones. The protein is Adenylate dimethylallyltransferase (tzs) of Agrobacterium fabrum (strain C58 / ATCC 33970) (Agrobacterium tumefaciens (strain C58)).